Reading from the N-terminus, the 451-residue chain is Serine--tRNA ligase (451 aa).

247–249 (TAE) contributes to the L-serine binding site. ATP is bound by residues 278–280 (RKE) and valine 294. Glutamate 301 contacts L-serine. 365–368 (ELAS) serves as a coordination point for ATP. Threonine 400 provides a ligand contact to L-serine.

Belongs to the class-II aminoacyl-tRNA synthetase family. Type-1 seryl-tRNA synthetase subfamily. In terms of assembly, homodimer. The tRNA molecule binds across the dimer.

The protein localises to the cytoplasm. The catalysed reaction is tRNA(Ser) + L-serine + ATP = L-seryl-tRNA(Ser) + AMP + diphosphate + H(+). The enzyme catalyses tRNA(Sec) + L-serine + ATP = L-seryl-tRNA(Sec) + AMP + diphosphate + H(+). It functions in the pathway aminoacyl-tRNA biosynthesis; selenocysteinyl-tRNA(Sec) biosynthesis; L-seryl-tRNA(Sec) from L-serine and tRNA(Sec): step 1/1. Catalyzes the attachment of serine to tRNA(Ser). Is also able to aminoacylate tRNA(Sec) with serine, to form the misacylated tRNA L-seryl-tRNA(Sec), which will be further converted into selenocysteinyl-tRNA(Sec). This is Serine--tRNA ligase from Pyrobaculum aerophilum (strain ATCC 51768 / DSM 7523 / JCM 9630 / CIP 104966 / NBRC 100827 / IM2).